A 392-amino-acid polypeptide reads, in one-letter code: NAC domain-containing protein 58 (392 aa).

Residues 9–173 (LPPGFRFHPT…DWVLCRIYKK (165 aa)) form the NAC domain. Residues 317-345 (STSAGAVVEPPAVTGKRKRSSDGGEPTIQ) form a disordered region.

Expressed in leaves, nodes, internodes and mature seeds. Highly expressed in roots. Expressed in leaf sheaths, flag leaves and inflorescences. Expressed in primary and lateral roots, particularly in the vascular tissues. Expressed in the primary phloem of the culm and leaf sheaths. Expressed principally in the primary phloem and in the peripheral zone of the leaf vascular bundles. Expressed in the floral tissues.

Its subcellular location is the nucleus. In terms of biological role, transcription factor that acts as a positive regulator of the jasmonate (JA) pathway to mediate leaf senescence. May directly regulate LOX2, AOC, AOS2, AOC1 and OPR7, which are genes involved in the biosynthesis of JA. Regulates positively leaf senescence by directly targeting senescence-associated genes (SAGs) related to chlorophyll degradation, nutrient transport and other genes associated with abscisic acid-induced leaf senescence. Transcription activator that plays a role in mediating abiotic stress responses through the abscisic acid (ABA) pathway. Possesses transcriptional activator activity in yeast. The polypeptide is NAC domain-containing protein 58 (Oryza sativa subsp. japonica (Rice)).